The sequence spans 168 residues: Protein SprT (168 aa).

In terms of domain architecture, SprT-like spans 20–166 (EKLQQANKYL…RHCQAILQLI (147 aa)). His-78 contacts Zn(2+). Residue Glu-79 is part of the active site. A Zn(2+)-binding site is contributed by His-82.

It belongs to the SprT family. The cofactor is Zn(2+).

It is found in the cytoplasm. This chain is Protein SprT, found in Proteus mirabilis (strain HI4320).